Here is a 102-residue protein sequence, read N- to C-terminus: Flagellar hook-basal body complex protein FliE 1 (102 aa).

This sequence belongs to the FliE family.

The protein localises to the bacterial flagellum basal body. This chain is Flagellar hook-basal body complex protein FliE 1 (fliE1), found in Bradyrhizobium diazoefficiens (strain JCM 10833 / BCRC 13528 / IAM 13628 / NBRC 14792 / USDA 110).